Consider the following 132-residue polypeptide: Histone H2B.1 (132 aa).

Positions 1–13 are enriched in low complexity; the sequence is MSSKASKAPASKA. The interval 1-40 is disordered; sequence MSSKASKAPASKAPAEKKPAAKKTSSSVDASKKRTKTRKE. Lysine 7 is subject to N6-acetyllysine; alternate. A Glycyl lysine isopeptide (Lys-Gly) (interchain with G-Cter in SUMO); alternate cross-link involves residue lysine 7. Serine 11 is modified (phosphoserine). Lysine 12 carries the N6-acetyllysine modification. Lysine 17 carries the N6-acetyllysine; alternate modification. Lysine 17 participates in a covalent cross-link: Glycyl lysine isopeptide (Lys-Gly) (interchain with G-Cter in SUMO); alternate. Lysine 18 is covalently cross-linked (Glycyl lysine isopeptide (Lys-Gly) (interchain with G-Cter in SUMO)). Lysine 125 participates in a covalent cross-link: Glycyl lysine isopeptide (Lys-Gly) (interchain with G-Cter in ubiquitin).

Belongs to the histone H2B family. The nucleosome is a histone octamer containing two molecules each of H2A, H2B, H3 and H4 assembled in one H3-H4 heterotetramer and two H2A-H2B heterodimers. The octamer wraps approximately 147 bp of DNA. Monoubiquitinated by the UBC2-BRE1 complex to form H2BK123ub1. H2BK123ub1 gives a specific tag for epigenetic transcriptional activation and is also prerequisite for H3K4me and H3K79me formation. H2BK123ub1 also modulates the formation of double-strand breaks during meiosis and is a prerequisite for DNA-damage checkpoint activation. In terms of processing, phosphorylated by STE20 to form H2BS10ph during progression through meiotic prophase. May be correlated with chromosome condensation. Post-translationally, acetylated by GCN5 to form H2BK11ac and H2BK16ac. H2BK16ac can also be formed by ESA1. Acetylation of N-terminal lysines and particularly formation of H2BK11acK16ac has a positive effect on transcription. Sumoylation to form H2BK6su and probably also H2BK16su or H2BK17su, occurs preferentially near the telomeres and represses gene transcription.

It localises to the nucleus. Its subcellular location is the chromosome. Core component of nucleosome. Nucleosomes wrap and compact DNA into chromatin, limiting DNA accessibility to the cellular machineries which require DNA as a template. Histones thereby play a central role in transcription regulation, DNA repair, DNA replication and chromosomal stability. DNA accessibility is regulated via a complex set of post-translational modifications of histones, also called histone code, and nucleosome remodeling. The sequence is that of Histone H2B.1 (HTB1) from Eremothecium gossypii (strain ATCC 10895 / CBS 109.51 / FGSC 9923 / NRRL Y-1056) (Yeast).